The primary structure comprises 159 residues: D-aminoacyl-tRNA deacylase (159 aa).

A Gly-cisPro motif, important for rejection of L-amino acids motif is present at residues 142 to 143 (GP).

Belongs to the DTD family. Homodimer.

The protein resides in the cytoplasm. The catalysed reaction is glycyl-tRNA(Ala) + H2O = tRNA(Ala) + glycine + H(+). It carries out the reaction a D-aminoacyl-tRNA + H2O = a tRNA + a D-alpha-amino acid + H(+). In terms of biological role, an aminoacyl-tRNA editing enzyme that deacylates mischarged D-aminoacyl-tRNAs. Also deacylates mischarged glycyl-tRNA(Ala), protecting cells against glycine mischarging by AlaRS. Acts via tRNA-based rather than protein-based catalysis; rejects L-amino acids rather than detecting D-amino acids in the active site. By recycling D-aminoacyl-tRNA to D-amino acids and free tRNA molecules, this enzyme counteracts the toxicity associated with the formation of D-aminoacyl-tRNA entities in vivo and helps enforce protein L-homochirality. The chain is D-aminoacyl-tRNA deacylase from Albidiferax ferrireducens (strain ATCC BAA-621 / DSM 15236 / T118) (Rhodoferax ferrireducens).